The chain runs to 193 residues: Phosphoheptose isomerase (193 aa).

One can recognise an SIS domain in the interval leucine 37–alanine 193. Asparagine 52–glycine 54 is a substrate binding site. Zn(2+)-binding residues include histidine 61 and glutamate 65. Substrate-binding positions include glutamate 65, asparagine 93 to aspartate 94, serine 119 to serine 121, serine 124, and glutamine 172. Positions 172 and 180 each coordinate Zn(2+).

This sequence belongs to the SIS family. GmhA subfamily. Homotetramer. Zn(2+) serves as cofactor.

The protein resides in the cytoplasm. The catalysed reaction is 2 D-sedoheptulose 7-phosphate = D-glycero-alpha-D-manno-heptose 7-phosphate + D-glycero-beta-D-manno-heptose 7-phosphate. Its pathway is carbohydrate biosynthesis; D-glycero-D-manno-heptose 7-phosphate biosynthesis; D-glycero-alpha-D-manno-heptose 7-phosphate and D-glycero-beta-D-manno-heptose 7-phosphate from sedoheptulose 7-phosphate: step 1/1. It functions in the pathway bacterial outer membrane biogenesis; LPS core biosynthesis. Catalyzes the isomerization of sedoheptulose 7-phosphate in D-glycero-D-manno-heptose 7-phosphate. The protein is Phosphoheptose isomerase of Photorhabdus laumondii subsp. laumondii (strain DSM 15139 / CIP 105565 / TT01) (Photorhabdus luminescens subsp. laumondii).